The sequence spans 2028 residues: Pecanex-like protein 3 (2028 aa).

The next 2 helical transmembrane spans lie at 33 to 53 (CFHLYVWIFLLIFPFLLYMVL) and 54 to 74 (PPSLMVAGVYCLVVAVIFATI). Residue Asn-95 is glycosylated (N-linked (GlcNAc...) asparagine). The tract at residues 96-116 (STMGEQEEEAAQGESSLPRDP) is disordered. Ser-127 carries the phosphoserine modification. Thr-129 is modified (phosphothreonine). 2 disordered regions span residues 193-239 (IGDL…PMSP) and 263-625 (LVRT…SHSR). Residues 198–208 (QTPPGVVPDPS) are compositionally biased toward pro residues. 2 stretches are compositionally biased toward basic and acidic residues: residues 263–273 (LVRTSSRREQC) and 305–319 (TDRETLSSFKSEKTN). Asn-319 carries an N-linked (GlcNAc...) asparagine glycan. Thr-370 is modified (phosphothreonine). Phosphoserine is present on residues Ser-392 and Ser-431. Over residues 427–437 (GSELSPASSLR) the composition is skewed to polar residues. Positions 444 to 459 (TDSSSSTSCYSPESSQ) are enriched in low complexity. A compositionally biased stretch (polar residues) spans 488 to 497 (TQRTPSTASA). A phosphoserine mark is found at Ser-505 and Ser-521. The next 7 helical transmembrane spans lie at 793–815 (NIFGVGLSSLVAFLGYLLLLKGF), 819–836 (IWVFQFCLVIASCQYSLL), 852–872 (WVIAYSRPVYFCICCLLIWLL), 880–900 (PFPPVSLYGLTLFSASFFFCA), 903–923 (VATVFTLCFPFVFLLGLLPQV), 946–968 (SPLTAVFSLTRSLLAAALLYGFC), and 980–1000 (HVPVLFSVFCGLLVAMSYHLS). Ser-1025 carries the phosphoserine modification. Helical transmembrane passes span 1053–1073 (LVMCVVIAVLTFAVSASTVFI), 1078–1098 (VLGFVLYALAGAVGFFTHYLL), 1244–1264 (FVLTYIAPWQITWGSAFHAFA), and 1280–1300 (LLSGLFSTPLNPLLGSAVFIM). Phosphoserine is present on Ser-1697. An N-linked (GlcNAc...) asparagine glycan is attached at Asn-1770. Positions 1845 to 2028 (GLTSLSNHPP…AAQPLLEHQY (184 aa)) are disordered. The span at 1890-1921 (RPPPLLQWPPPRLPGPPPASPAPTEGPRPSRP) shows a compositional bias: pro residues. Phosphoserine is present on residues Ser-1909 and Ser-1955. The span at 1966–1977 (PLDLSLSPDVSS) shows a compositional bias: low complexity. Positions 1978–1987 (EASPARTTQD) are enriched in polar residues.

This sequence belongs to the pecanex family.

The protein resides in the membrane. This chain is Pecanex-like protein 3, found in Mus musculus (Mouse).